The primary structure comprises 576 residues: 2-isopropylmalate synthase (576 aa).

In terms of domain architecture, Pyruvate carboxyltransferase spans 31-305; it reads PIWMSTDLRD…DPGLDFSHVN (275 aa). The Mg(2+) site is built by Asp40, His244, His246, and Asn280. The segment at 437–576 is regulatory domain; it reads ADGPIGYVSH…RGMAPSMELA (140 aa).

The protein belongs to the alpha-IPM synthase/homocitrate synthase family. LeuA type 2 subfamily. As to quaternary structure, homodimer. Requires Mg(2+) as cofactor.

It is found in the cytoplasm. It carries out the reaction 3-methyl-2-oxobutanoate + acetyl-CoA + H2O = (2S)-2-isopropylmalate + CoA + H(+). Its pathway is amino-acid biosynthesis; L-leucine biosynthesis; L-leucine from 3-methyl-2-oxobutanoate: step 1/4. Its function is as follows. Catalyzes the condensation of the acetyl group of acetyl-CoA with 3-methyl-2-oxobutanoate (2-ketoisovalerate) to form 3-carboxy-3-hydroxy-4-methylpentanoate (2-isopropylmalate). The protein is 2-isopropylmalate synthase of Ralstonia nicotianae (strain ATCC BAA-1114 / GMI1000) (Ralstonia solanacearum).